The following is a 304-amino-acid chain: tRNA dimethylallyltransferase (304 aa).

Residue 2–9 participates in ATP binding; sequence GPTASGKT. 4–9 contacts substrate; it reads TASGKT. Interaction with substrate tRNA regions lie at residues 27–30, 151–155, 232–237, and 265–272; these read DSAL, QRINR, RCVGYR, and KRQITWLR.

This sequence belongs to the IPP transferase family. Monomer. Mg(2+) serves as cofactor.

The enzyme catalyses adenosine(37) in tRNA + dimethylallyl diphosphate = N(6)-dimethylallyladenosine(37) in tRNA + diphosphate. Functionally, catalyzes the transfer of a dimethylallyl group onto the adenine at position 37 in tRNAs that read codons beginning with uridine, leading to the formation of N6-(dimethylallyl)adenosine (i(6)A). In Actinobacillus pleuropneumoniae serotype 7 (strain AP76), this protein is tRNA dimethylallyltransferase.